The chain runs to 148 residues: Large ribosomal subunit protein bL9 (148 aa).

Residues 46–65 (QLQQQNKHAEQEREQEIEDA) form a disordered region. Over residues 52 to 65 (KHAEQEREQEIEDA) the composition is skewed to basic and acidic residues.

This sequence belongs to the bacterial ribosomal protein bL9 family.

In terms of biological role, binds to the 23S rRNA. This Staphylococcus carnosus (strain TM300) protein is Large ribosomal subunit protein bL9.